The chain runs to 397 residues: GTPase Obg (397 aa).

The Obg domain maps to 1-159; it reads MKFVDEAEIR…RMLKLELMLL (159 aa). A disordered region spans residues 22-44; that stretch reads SFRREKYVPDGGPDGGDGGDGGS. Residues 33-43 are compositionally biased toward gly residues; the sequence is GPDGGDGGDGG. An OBG-type G domain is found at 160–333; the sequence is ADVGLLGMPN…LCIKVMDFIE (174 aa). GTP is bound by residues 166-173, 191-195, 213-216, 283-286, and 314-316; these read GMPNAGKS, FTTLV, DIPG, NKVD, and SAV. The Mg(2+) site is built by serine 173 and threonine 193. Residues 359-389 form a disordered region; the sequence is TVENYEDDDDFDDDDDDDFDGDDDDDFDGDD. Residues 361–389 show a composition bias toward acidic residues; the sequence is ENYEDDDDFDDDDDDDFDGDDDDDFDGDD.

Belongs to the TRAFAC class OBG-HflX-like GTPase superfamily. OBG GTPase family. As to quaternary structure, monomer. The cofactor is Mg(2+).

The protein localises to the cytoplasm. An essential GTPase which binds GTP, GDP and possibly (p)ppGpp with moderate affinity, with high nucleotide exchange rates and a fairly low GTP hydrolysis rate. Plays a role in control of the cell cycle, stress response, ribosome biogenesis and in those bacteria that undergo differentiation, in morphogenesis control. This Pseudoalteromonas atlantica (strain T6c / ATCC BAA-1087) protein is GTPase Obg.